The sequence spans 425 residues: Serine--tRNA ligase (425 aa).

232–234 (TAE) serves as a coordination point for L-serine. Residues 263-265 (RRE) and Val-279 contribute to the ATP site. An L-serine-binding site is contributed by Glu-286. Position 350–353 (350–353 (EVVS)) interacts with ATP. Thr-387 is an L-serine binding site.

This sequence belongs to the class-II aminoacyl-tRNA synthetase family. Type-1 seryl-tRNA synthetase subfamily. In terms of assembly, homodimer. The tRNA molecule binds across the dimer.

The protein localises to the cytoplasm. The enzyme catalyses tRNA(Ser) + L-serine + ATP = L-seryl-tRNA(Ser) + AMP + diphosphate + H(+). It catalyses the reaction tRNA(Sec) + L-serine + ATP = L-seryl-tRNA(Sec) + AMP + diphosphate + H(+). It participates in aminoacyl-tRNA biosynthesis; selenocysteinyl-tRNA(Sec) biosynthesis; L-seryl-tRNA(Sec) from L-serine and tRNA(Sec): step 1/1. Catalyzes the attachment of serine to tRNA(Ser). Is also able to aminoacylate tRNA(Sec) with serine, to form the misacylated tRNA L-seryl-tRNA(Sec), which will be further converted into selenocysteinyl-tRNA(Sec). The chain is Serine--tRNA ligase from Methanocorpusculum labreanum (strain ATCC 43576 / DSM 4855 / Z).